The primary structure comprises 304 residues: Pyridoxal 5'-phosphate synthase subunit PdxS (304 aa).

Asp34 contacts D-ribose 5-phosphate. Lys91 (schiff-base intermediate with D-ribose 5-phosphate) is an active-site residue. Gly163 is a binding site for D-ribose 5-phosphate. Arg175 provides a ligand contact to D-glyceraldehyde 3-phosphate. Residues Gly224 and 245-246 each bind D-ribose 5-phosphate; that span reads GS.

This sequence belongs to the PdxS/SNZ family. In the presence of PdxT, forms a dodecamer of heterodimers.

The enzyme catalyses aldehydo-D-ribose 5-phosphate + D-glyceraldehyde 3-phosphate + L-glutamine = pyridoxal 5'-phosphate + L-glutamate + phosphate + 3 H2O + H(+). Its pathway is cofactor biosynthesis; pyridoxal 5'-phosphate biosynthesis. Its function is as follows. Catalyzes the formation of pyridoxal 5'-phosphate from ribose 5-phosphate (RBP), glyceraldehyde 3-phosphate (G3P) and ammonia. The ammonia is provided by the PdxT subunit. Can also use ribulose 5-phosphate and dihydroxyacetone phosphate as substrates, resulting from enzyme-catalyzed isomerization of RBP and G3P, respectively. This is Pyridoxal 5'-phosphate synthase subunit PdxS from Cutibacterium acnes (strain DSM 16379 / KPA171202) (Propionibacterium acnes).